Reading from the N-terminus, the 354-residue chain is Major egg antigen (354 aa).

The tract at residues 1–21 (MSGGKQHNAVSIPVNREQRSF) is disordered. SHSP domains are found at residues 122 to 233 (SVND…VAVR) and 251 to 354 (AKGV…AITH).

Belongs to the small heat shock protein (HSP20) family.

This chain is Major egg antigen, found in Schistosoma mansoni (Blood fluke).